The sequence spans 359 residues: MRQIMIAVAIAVAVSILLTPALIRLFTKQGFGHQIREDGPPSHHSKRGTPSMGGVAILAGIWAGYFGTHLAGLAFDGEGITASGLLVLGLATSLGGVGFLDDLIKLRRSRNLGLNKTAKTVGQITSAVLFAVLVLQFRNPAGLAPASAELSYVREIATVTLTPALFVLFCVLVVSAWSNAVNFTDGLDGLAAGCMAMVTGAYVLITFWQDHNACVTAPGLGCYNVRDPLDLALIAAATAGACIGFLWWNAAPAKIFMGDTGSLALGGIIAGLSVTSRTEILAVVLGALFVAEITSVVLQILTFRTTGRRVFRMAPFHHHFELVGWAETTVIIRFWLLTAITCGLGVALFYGEWLAAIGA.

Transmembrane regions (helical) follow at residues 3–23, 55–75, 80–100, 117–137, 156–176, 187–207, 231–251, 255–275, 280–300, and 334–354; these read QIMIAVAIAVAVSILLTPALI, VAILAGIWAGYFGTHLAGLAF, ITASGLLVLGLATSLGGVGFL, TAKTVGQITSAVLFAVLVLQF, IATVTLTPALFVLFCVLVVSA, LDGLAAGCMAMVTGAYVLITF, LALIAAATAGACIGFLWWNAA, IFMGDTGSLALGGIIAGLSVT, ILAVVLGALFVAEITSVVLQI, and FWLLTAITCGLGVALFYGEWL.

The protein belongs to the glycosyltransferase 4 family. MraY subfamily. Mg(2+) serves as cofactor.

It is found in the cell inner membrane. The enzyme catalyses UDP-N-acetyl-alpha-D-muramoyl-L-alanyl-gamma-D-glutamyl-meso-2,6-diaminopimeloyl-D-alanyl-D-alanine + di-trans,octa-cis-undecaprenyl phosphate = di-trans,octa-cis-undecaprenyl diphospho-N-acetyl-alpha-D-muramoyl-L-alanyl-D-glutamyl-meso-2,6-diaminopimeloyl-D-alanyl-D-alanine + UMP. Its pathway is cell wall biogenesis; peptidoglycan biosynthesis. Catalyzes the initial step of the lipid cycle reactions in the biosynthesis of the cell wall peptidoglycan: transfers peptidoglycan precursor phospho-MurNAc-pentapeptide from UDP-MurNAc-pentapeptide onto the lipid carrier undecaprenyl phosphate, yielding undecaprenyl-pyrophosphoryl-MurNAc-pentapeptide, known as lipid I. The chain is Phospho-N-acetylmuramoyl-pentapeptide-transferase from Mycobacterium marinum (strain ATCC BAA-535 / M).